Consider the following 468-residue polypeptide: 6-phosphogluconate dehydrogenase, decarboxylating (468 aa).

NADP(+)-binding positions include 10–15 (GMAVMG), 33–35 (NRT), 74–76 (VQS), and asparagine 102. Substrate is bound by residues asparagine 102 and 128-130 (SGG). Lysine 182 functions as the Proton acceptor in the catalytic mechanism. Substrate is bound at residue 185-186 (HN). Residue glutamate 189 is the Proton donor of the active site. Tyrosine 190, lysine 259, arginine 286, arginine 445, and histidine 451 together coordinate substrate.

The protein belongs to the 6-phosphogluconate dehydrogenase family. In terms of assembly, homodimer.

The enzyme catalyses 6-phospho-D-gluconate + NADP(+) = D-ribulose 5-phosphate + CO2 + NADPH. The protein operates within carbohydrate degradation; pentose phosphate pathway; D-ribulose 5-phosphate from D-glucose 6-phosphate (oxidative stage): step 3/3. Catalyzes the oxidative decarboxylation of 6-phosphogluconate to ribulose 5-phosphate and CO(2), with concomitant reduction of NADP to NADPH. The polypeptide is 6-phosphogluconate dehydrogenase, decarboxylating (gnd) (Buchnera aphidicola subsp. Acyrthosiphon pisum (strain APS) (Acyrthosiphon pisum symbiotic bacterium)).